The sequence spans 173 residues: Alpha-crystallin A chain (173 aa).

Position 1 is an N-acetylmethionine (methionine 1). The segment at 1–63 is required for complex formation with BFSP1 and BFSP2; the sequence is MDIAIQHPWF…RTVLDSGISE (63 aa). Deamidated glutamine; partial is present on glutamine 6. Serine 45 carries the post-translational modification Phosphoserine. Position 50 is a deamidated glutamine; partial (glutamine 50). In terms of domain architecture, sHSP spans 52 to 162; that stretch reads LFRTVLDSGI…GHSERAIPVS (111 aa). 2 positions are modified to N6-acetyllysine: lysine 70 and lysine 99. Histidine 100 contacts Zn(2+). Position 101 is a deamidated asparagine; partial (asparagine 101). Positions 102 and 107 each coordinate Zn(2+). Serine 122 carries the post-translational modification Phosphoserine. Asparagine 123 carries the post-translational modification Deamidated asparagine; partial. The interval 144-173 is disordered; it reads PKVPSGMDAGHSERAIPVSREEKPSSAPSS. The span at 153–167 shows a compositional bias: basic and acidic residues; the sequence is GHSERAIPVSREEKP. Histidine 154 provides a ligand contact to Zn(2+). A glycan (O-linked (GlcNAc) serine) is linked at serine 162.

It belongs to the small heat shock protein (HSP20) family. As to quaternary structure, heteromer composed of three CRYAA and one CRYAB subunits. Inter-subunit bridging via zinc ions enhances stability, which is crucial as there is no protein turn over in the lens. Can also form homodimers and homotetramers (dimers of dimers) which serve as the building blocks of homooligomers. Within homooligomers, the zinc-binding motif is created from residues of 3 different molecules. His-100 and Glu-102 from one molecule are ligands of the zinc ion, and His-107 and His-154 residues from additional molecules complete the site with tetrahedral coordination geometry. Part of a complex required for lens intermediate filament formation composed of BFSP1, BFSP2 and CRYAA. Acetylation at Lys-70 may increase chaperone activity. In terms of processing, undergoes age-dependent proteolytical cleavage at the C-terminus.

It localises to the cytoplasm. Its subcellular location is the nucleus. In terms of biological role, contributes to the transparency and refractive index of the lens. Acts as a chaperone, preventing aggregation of various proteins under a wide range of stress conditions. Required for the correct formation of lens intermediate filaments as part of a complex composed of BFSP1, BFSP2 and CRYAA. In Melursus ursinus (Sloth bear), this protein is Alpha-crystallin A chain (CRYAA).